The chain runs to 94 residues: DNA-binding protein HU (94 aa).

It belongs to the bacterial histone-like protein family. In terms of assembly, homodimer.

Its function is as follows. Histone-like DNA-binding protein which is capable of wrapping DNA to stabilize it, and thus to prevent its denaturation under extreme environmental conditions. The protein is DNA-binding protein HU (hup) of Helicobacter pylori (strain J99 / ATCC 700824) (Campylobacter pylori J99).